Consider the following 348-residue polypeptide: Large ribosomal subunit protein uL3m (348 aa).

The transit peptide at 1-40 (MPGWRLLAQAGARVLGCGARGLGADPGLERRKNILFFVRN) directs the protein to the mitochondrion.

Belongs to the universal ribosomal protein uL3 family. In terms of assembly, component of the mitochondrial ribosome large subunit (39S) which comprises a 16S rRNA and about 50 distinct proteins.

It localises to the mitochondrion. The polypeptide is Large ribosomal subunit protein uL3m (Mrpl3) (Mus musculus (Mouse)).